The following is a 906-amino-acid chain: Cadherin-2A (906 aa).

The signal sequence occupies residues 1-28; sequence MCRKEPFLLPTALCILAALVLHQGPVEA. The propeptide occupies 29 to 160; the sequence is LGGSRLCKTG…KHNGLQRQKR (132 aa). 5 consecutive Cadherin domains span residues 161 to 268, 269 to 383, 384 to 498, 499 to 604, and 605 to 714; these read DWVI…RPEF, LHQI…PPEF, TAMT…NPYF, TPNP…DNAP, and YVYP…TTAP. Over 161–724 the chain is Extracellular; it reads DWVIPPINVP…IIGTGLGTGA (564 aa). 8 residues coordinate Ca(2+): E171, D227, E229, D260, M261, N262, D263, and N264. N274 carries an N-linked (GlcNAc...) asparagine glycan. Ca(2+)-binding residues include D294, D296, and N302. N-linked (GlcNAc...) asparagine glycosylation is present at N326. Residue D354 participates in Ca(2+) binding. N403, N573, N623, N652, and N693 each carry an N-linked (GlcNAc...) asparagine glycan. A helical membrane pass occupies residues 725–746; the sequence is IIAILLCIIILLTLVLMFVVWM. Over 747–906 the chain is Cytoplasmic; sequence KRRDKERQAK…LADMYGGSDD (160 aa). Disordered stretches follow at residues 775–800 and 863–884; these read EEGG…EPDT and SGST…EQDY. Residues 776–785 show a composition bias toward acidic residues; the sequence is EGGGEEDQDY. The span at 863–880 shows a compositional bias: low complexity; sequence SGSTAGSLSSLNSSSSGG.

As to quaternary structure, homodimer (via extracellular region). Can also form heterodimers with other cadherins (via extracellular region). Dimerization occurs in trans, i.e. with a cadherin chain from another cell.

Its subcellular location is the cell membrane. The protein resides in the sarcolemma. The protein localises to the cell junction. It is found in the cell surface. It localises to the desmosome. Its subcellular location is the adherens junction. Its function is as follows. Calcium-dependent cell adhesion protein; preferentially mediates homotypic cell-cell adhesion. Cadherins may thus contribute to the sorting of heterogeneous cell types, and thereby play an important role during embryonic development. Required for proper neurite branching. Required for pre- and postsynaptic organization. This Xenopus laevis (African clawed frog) protein is Cadherin-2A (cdh2-a).